Reading from the N-terminus, the 273-residue chain is HUWE1-associated protein modifying stress responses 2 (273 aa).

Disordered stretches follow at residues 146 to 181 (GKVPPAPPPPRTPRTPPKPPTGVTSQAVATESSSSV), 204 to 230 (ISMRSGDSPQDSGVASSGRRKTSFLED), and 251 to 273 (KRTSAQCSDGITDSPIQKRNRMV). Pro residues predominate over residues 149–165 (PPAPPPPRTPRTPPKPP). Composition is skewed to polar residues over residues 170–181 (SQAVATESSSSV), 208–218 (SGDSPQDSGVA), and 254–267 (SAQCSDGITDSPIQ). The interval 249–273 (IRKRTSAQCSDGITDSPIQKRNRMV) is nuclear localization signal.

Belongs to the HAPSTR1 family. Homooligomer. Heterooligomer with HAPSTR1; the interaction is direct and stabilizes HAPSTR1 independently of HUWE1. Interacts with HUWE1. As to expression, expressed in a tissue-restricted manner compared to HAPSTR1.

The protein localises to the nucleus. Together with HAPSTR1 plays a central regulatory role in the cellular response to molecular stressors, such as DNA damage, nutrient scarcity, and protein misfolding. Regulates these multiple stress response signaling pathways by stabilizing HAPSTR1, but also independently of HAPSTR1. The protein is HUWE1-associated protein modifying stress responses 2 of Homo sapiens (Human).